The following is a 632-amino-acid chain: X-ray repair cross-complementing protein 5 (632 aa).

Arg-52 functions as the Schiff-base intermediate with DNA; for 5'-deoxyribose-5-phosphate lyase activity in the catalytic mechanism. The Ku domain maps to 283-490 (LYLNKDLSFS…VDKMKGIIQK (208 aa)). The interval 555–578 (DYSPEGKAAKRKQAGDAQAEKRPK) is disordered. In terms of domain architecture, SAP spans 595-629 (LGKLTVSALKDTCRHYGLRSGGKKQELIDALTEYF).

This sequence belongs to the ku70 family. Heterodimer composed of XRCC5/Ku80 and XRCC6/Ku70. Component of the core long-range non-homologous end joining (NHEJ) complex (also named DNA-PK complex) composed of PRKDC, LIG4, XRCC4, XRCC6/Ku70, XRCC5/Ku86 and NHEJ1/XLF. Additional component of the NHEJ complex includes PAXX. Following autophosphorylation, PRKDC dissociates from DNA, leading to formation of the short-range NHEJ complex, composed of LIG4, XRCC4, XRCC6/Ku70, XRCC5/Ku86 and NHEJ1/XLF. Post-translationally, phosphorylated on serine residues.

It localises to the nucleus. The protein resides in the chromosome. Its function is as follows. Single-stranded DNA-dependent ATP-dependent helicase that plays a key role in DNA non-homologous end joining (NHEJ) by recruiting DNA-PK to DNA. Required for double-strand break repair and V(D)J recombination. Also has a role in chromosome translocation. Has a role in chromosome translocation. The DNA helicase II complex binds preferentially to fork-like ends of double-stranded DNA in a cell cycle-dependent manner. It works in the 3'-5' direction. During NHEJ, the XRCC5-XRRC6 dimer performs the recognition step: it recognizes and binds to the broken ends of the DNA and protects them from further resection. Binding to DNA may be mediated by XRCC6. The XRCC5-XRRC6 dimer acts as a regulatory subunit of the DNA-dependent protein kinase complex DNA-PK by increasing the affinity of the catalytic subunit PRKDC to DNA by 100-fold. The XRCC5-XRRC6 dimer is probably involved in stabilizing broken DNA ends and bringing them together. The assembly of the DNA-PK complex to DNA ends is required for the NHEJ ligation step. Probably also acts as a 5'-deoxyribose-5-phosphate lyase (5'-dRP lyase), by catalyzing the beta-elimination of the 5' deoxyribose-5-phosphate at an abasic site near double-strand breaks. 5'-dRP lyase activity allows to 'clean' the termini of abasic sites, a class of nucleotide damage commonly associated with strand breaks, before such broken ends can be joined. The XRCC5-XRRC6 dimer together with APEX1 acts as a negative regulator of transcription. This Gallus gallus (Chicken) protein is X-ray repair cross-complementing protein 5 (XRCC6).